Here is an 83-residue protein sequence, read N- to C-terminus: RNA-binding protein Hfq (83 aa).

Residues 10-69 (DPFLNALRREHVPVSIYLVNGIKLQGQIESFDQYVVLLRNTVTQMVYKHAISTIVPGRAV) form the Sm domain.

It belongs to the Hfq family. As to quaternary structure, homohexamer.

RNA chaperone that binds small regulatory RNA (sRNAs) and mRNAs to facilitate mRNA translational regulation in response to envelope stress, environmental stress and changes in metabolite concentrations. Also binds with high specificity to tRNAs. This Delftia acidovorans (strain DSM 14801 / SPH-1) protein is RNA-binding protein Hfq.